Here is a 779-residue protein sequence, read N- to C-terminus: Protocadherin beta-8 (779 aa).

A signal peptide spans 1–28 (METALTKTPEKRQVIFLAILLLLWEASS). Residues 29–690 (EAISYSMPEE…QEEDMLTLYL (662 aa)) are Extracellular-facing. Cadherin domains follow at residues 75 to 133 (LQLD…FPEF), 134 to 242 (PDTE…APQF), 243 to 346 (LQSL…APKL), 347 to 450 (TISS…APAF), and 451 to 560 (TQTS…APFV). A disulfide bridge links C96 with C102. N169 is a glycosylation site (N-linked (GlcNAc...) asparagine). A glycan (O-linked (Man) serine) is linked at S223. O-linked (Man) threonine glycosylation is found at T225 and T227. N-linked (GlcNAc...) asparagine glycosylation occurs at N417. Residue N566 is glycosylated (N-linked (GlcNAc...) asparagine). Residues 575-675 (LPRAAEPGYL…SQPYLPLPEV (101 aa)) enclose the Cadherin 6 domain. Residues 691-711 (VIALASVSSLFLLSVLLFVGV) traverse the membrane as a helical segment. Topologically, residues 712–779 (KLCKKAREAS…IIPSSLLQDS (68 aa)) are cytoplasmic.

In terms of assembly, forms homodimers in trans (molecules expressed by two different cells). Forms promiscuous heterodimers in cis (at the plasma membrane of the same cell) with other protocadherins.

Its subcellular location is the cell membrane. Calcium-dependent cell-adhesion protein involved in cells self-recognition and non-self discrimination. Thereby, it is involved in the establishment and maintenance of specific neuronal connections in the brain. In Mus musculus (Mouse), this protein is Protocadherin beta-8.